The sequence spans 561 residues: Dihydroxy-acid dehydratase (561 aa).

[2Fe-2S] cluster is bound at residue Cys-50. Residue Asp-82 participates in Mg(2+) binding. [2Fe-2S] cluster is bound at residue Cys-123. Mg(2+) contacts are provided by Asp-124 and Lys-125. At Lys-125 the chain carries N6-carboxylysine. Cys-195 serves as a coordination point for [2Fe-2S] cluster. Glu-447 contributes to the Mg(2+) binding site. Residue Ser-473 is the Proton acceptor of the active site.

This sequence belongs to the IlvD/Edd family. As to quaternary structure, homodimer. It depends on [2Fe-2S] cluster as a cofactor. Mg(2+) is required as a cofactor.

The enzyme catalyses (2R)-2,3-dihydroxy-3-methylbutanoate = 3-methyl-2-oxobutanoate + H2O. It carries out the reaction (2R,3R)-2,3-dihydroxy-3-methylpentanoate = (S)-3-methyl-2-oxopentanoate + H2O. It functions in the pathway amino-acid biosynthesis; L-isoleucine biosynthesis; L-isoleucine from 2-oxobutanoate: step 3/4. The protein operates within amino-acid biosynthesis; L-valine biosynthesis; L-valine from pyruvate: step 3/4. Functionally, functions in the biosynthesis of branched-chain amino acids. Catalyzes the dehydration of (2R,3R)-2,3-dihydroxy-3-methylpentanoate (2,3-dihydroxy-3-methylvalerate) into 2-oxo-3-methylpentanoate (2-oxo-3-methylvalerate) and of (2R)-2,3-dihydroxy-3-methylbutanoate (2,3-dihydroxyisovalerate) into 2-oxo-3-methylbutanoate (2-oxoisovalerate), the penultimate precursor to L-isoleucine and L-valine, respectively. In Trichodesmium erythraeum (strain IMS101), this protein is Dihydroxy-acid dehydratase.